A 127-amino-acid chain; its full sequence is Holo-[acyl-carrier-protein] synthase (127 aa).

2 residues coordinate Mg(2+): Asp8 and Glu57.

Belongs to the P-Pant transferase superfamily. AcpS family. The cofactor is Mg(2+).

The protein localises to the cytoplasm. The catalysed reaction is apo-[ACP] + CoA = holo-[ACP] + adenosine 3',5'-bisphosphate + H(+). In terms of biological role, transfers the 4'-phosphopantetheine moiety from coenzyme A to a Ser of acyl-carrier-protein. The protein is Holo-[acyl-carrier-protein] synthase of Ruthia magnifica subsp. Calyptogena magnifica.